A 260-amino-acid polypeptide reads, in one-letter code: Vesicle-associated membrane protein/synaptobrevin-binding protein (260 aa).

Residues 1 to 238 (MASHEQALIL…SPAPAAAVRA (238 aa)) lie on the Cytoplasmic side of the membrane. One can recognise an MSP domain in the interval 7-125 (ALILEPAGEL…MDTKLRCVFE (119 aa)). The tract at residues 127–177 (PDGSHQAPASDASRATDAGAHFSESALEDPTVASRKTETQSPKRVGAVGSA) is disordered. Residues 172–216 (GAVGSAGEDVKKLQHELKKAQSEITSLKGENSQLKDEGIRLRKVA) adopt a coiled-coil conformation. The helical; Anchor for type IV membrane protein transmembrane segment at 239-259 (FPPVVYVVAAIILGLIIGKFL) threads the bilayer.

Belongs to the VAMP-associated protein (VAP) (TC 9.B.17) family. As to expression, detected only in the central nervous system and the gill of aplysia.

It localises to the membrane. It is found in the synapse. The protein resides in the synaptosome. Required for neurotransmitter release. Interacts with VAMP. The sequence is that of Vesicle-associated membrane protein/synaptobrevin-binding protein from Aplysia californica (California sea hare).